The chain runs to 206 residues: Pyrrolidone-carboxylate peptidase (206 aa).

Active-site residues include Glu-78, Cys-141, and His-165.

This sequence belongs to the peptidase C15 family. Homotetramer.

The protein localises to the cytoplasm. The enzyme catalyses Release of an N-terminal pyroglutamyl group from a polypeptide, the second amino acid generally not being Pro.. Its function is as follows. Removes 5-oxoproline from various penultimate amino acid residues except L-proline. This chain is Pyrrolidone-carboxylate peptidase, found in Thermococcus kodakarensis (strain ATCC BAA-918 / JCM 12380 / KOD1) (Pyrococcus kodakaraensis (strain KOD1)).